The following is a 453-amino-acid chain: Cholesterol 7-desaturase nvd (453 aa).

The helical transmembrane segment at 53–73 (IVEYILILTLMFAFSAILYVI) threads the bilayer. Positions 126–229 (WFAVAETREL…VVETDGAIWI (104 aa)) constitute a Rieske domain. The [2Fe-2S] cluster site is built by Cys167, His169, Cys187, and His190.

Belongs to the cholesterol 7-desaturase family. [2Fe-2S] cluster serves as cofactor.

Its subcellular location is the membrane. It catalyses the reaction cholesterol + NADPH + O2 + H(+) = 7-dehydrocholesterol + NADP(+) + 2 H2O. The enzyme catalyses cholesterol + NADH + O2 + H(+) = 7-dehydrocholesterol + NAD(+) + 2 H2O. The protein operates within steroid hormone biosynthesis; dafachronic acid biosynthesis. Catalyzes the production of 7-dehydrocholesterol (7-DHC or cholesta-5,7-dien-3beta-ol) by inserting a double bond (desaturating) at the C7-C8 single bond of cholesterol. Essential regulator of steroid biosynthesis as this reaction is the first step in the synthesis of the steroid hormone Delta(7)-dafachronic acid. The protein is Cholesterol 7-desaturase nvd of Bombyx mori (Silk moth).